The primary structure comprises 2904 residues: Protein eyes shut homolog (2904 aa).

The N-terminal stretch at 1–23 (MRNPKLAIIVFLLSCVIYGPVYS) is a signal peptide. Residues asparagine 41 and asparagine 135 are each glycosylated (N-linked (GlcNAc...) asparagine). EGF-like domains follow at residues 174–216 (KPQL…RYCE), 217–259 (NVDG…VNCS), 263–298 (GNQNCSKWCKEGACLKVSSTSYRCECFTGYTGTYCE), and 300–336 (KRLFCDSNPCRNDGRCEETANGYVCTCPGGFTGLNCE). Intrachain disulfides connect cysteine 178/cysteine 193, cysteine 187/cysteine 204, cysteine 206/cysteine 215, cysteine 221/cysteine 232, cysteine 226/cysteine 247, and cysteine 249/cysteine 258. Asparagine 257 and asparagine 266 each carry an N-linked (GlcNAc...) asparagine glycan. 6 disulfide bridges follow: cysteine 267–cysteine 276, cysteine 271–cysteine 286, cysteine 288–cysteine 297, cysteine 304–cysteine 315, cysteine 309–cysteine 324, and cysteine 326–cysteine 335. The N-linked (GlcNAc...) asparagine glycan is linked to asparagine 362. EGF-like domains are found at residues 375–411 (QAEVCGTLPCLNGGICVVPNGQYHCRCRQGFSGKNCE), 413–451 (IIDFCKLLNINCLNEGLCLNRVGGYNCLCAPGWTGEFCQ), and 453–496 (LENA…PYCE). 12 disulfides stabilise this stretch: cysteine 379/cysteine 390, cysteine 384/cysteine 399, cysteine 401/cysteine 410, cysteine 417/cysteine 430, cysteine 424/cysteine 439, cysteine 441/cysteine 450, cysteine 457/cysteine 470, cysteine 464/cysteine 484, cysteine 486/cysteine 495, cysteine 502/cysteine 513, cysteine 507/cysteine 522, and cysteine 524/cysteine 533. The 37-residue stretch at 498–534 (EVNECDSSPCQHQGTCTDFVGYYKCTCPSGYTGIDCE) folds into the EGF-like 8; calcium-binding domain. An N-linked (GlcNAc...) asparagine glycan is attached at asparagine 544. Residues 565 to 603 (HTPCPHYLQPCANGGHCVLHNITSYSCVCAPGWTGATCL) enclose the EGF-like 9 domain. Cystine bridges form between cysteine 568-cysteine 581, cysteine 575-cysteine 591, cysteine 593-cysteine 602, cysteine 609-cysteine 620, cysteine 614-cysteine 629, cysteine 631-cysteine 640, cysteine 645-cysteine 656, cysteine 650-cysteine 665, cysteine 667-cysteine 676, cysteine 683-cysteine 694, cysteine 688-cysteine 703, cysteine 705-cysteine 714, cysteine 721-cysteine 732, cysteine 726-cysteine 741, cysteine 743-cysteine 752, cysteine 759-cysteine 772, cysteine 764-cysteine 781, cysteine 783-cysteine 792, cysteine 799-cysteine 810, cysteine 804-cysteine 819, cysteine 821-cysteine 830, cysteine 837-cysteine 848, cysteine 842-cysteine 857, cysteine 859-cysteine 868, cysteine 875-cysteine 886, cysteine 880-cysteine 895, cysteine 897-cysteine 906, cysteine 913-cysteine 924, cysteine 918-cysteine 933, cysteine 935-cysteine 944, cysteine 951-cysteine 962, cysteine 956-cysteine 971, cysteine 973-cysteine 982, cysteine 987-cysteine 999, cysteine 993-cysteine 1014, cysteine 1016-cysteine 1025, cysteine 1032-cysteine 1042, cysteine 1037-cysteine 1051, cysteine 1053-cysteine 1062, cysteine 1069-cysteine 1080, cysteine 1074-cysteine 1089, cysteine 1091-cysteine 1100, cysteine 1107-cysteine 1118, cysteine 1112-cysteine 1127, cysteine 1129-cysteine 1138, cysteine 1145-cysteine 1156, cysteine 1150-cysteine 1167, cysteine 1169-cysteine 1178, cysteine 1185-cysteine 1198, cysteine 1192-cysteine 1208, cysteine 1210-cysteine 1219, cysteine 1226-cysteine 1237, cysteine 1231-cysteine 1246, cysteine 1248-cysteine 1257, cysteine 1264-cysteine 1275, cysteine 1269-cysteine 1284, cysteine 1286-cysteine 1295, cysteine 1302-cysteine 1313, cysteine 1307-cysteine 1322, cysteine 1324-cysteine 1333, cysteine 1340-cysteine 1351, cysteine 1345-cysteine 1360, cysteine 1362-cysteine 1371, cysteine 1378-cysteine 1388, cysteine 1383-cysteine 1397, cysteine 1399-cysteine 1408, cysteine 1415-cysteine 1426, cysteine 1420-cysteine 1435, cysteine 1437-cysteine 1446, cysteine 1453-cysteine 1469, cysteine 1463-cysteine 1479, cysteine 1481-cysteine 1490, cysteine 1497-cysteine 1508, cysteine 1502-cysteine 1517, cysteine 1519-cysteine 1528, cysteine 1535-cysteine 1545, cysteine 1540-cysteine 1556, and cysteine 1558-cysteine 1567. N-linked (GlcNAc...) asparagine glycosylation is present at asparagine 585. The EGF-like 10; calcium-binding domain maps to 605 to 641 (NINECVQHRCQNRATCVDEVGGYSCLCGHGYTGVHCE). The EGF-like 11 domain maps to 642 to 677 (LDFCSGHQCSEHAVCVDQQHNYTCRCMLGYEGTLCE). Asparagine 662 carries an N-linked (GlcNAc...) asparagine glycan. The EGF-like 12; calcium-binding domain maps to 679-715 (ETDECKSAPCTNNATCIDLVAGYQCLCAPGFKGRTCS). The N-linked (GlcNAc...) asparagine glycan is linked to asparagine 691. EGF-like domains lie at 717–753 (SMNECWSRPCNNGGSCIDLVNDYICNCPLGFTGHDCS), 755–793 (PATGCTSNPCNTKGTSMCEEQQDGFKCVCHHGYTGLFCE), and 795–831 (SINHCVEGLCHHGSECVDLTKGFMCECLPGLRGRLCE). The EGF-like 16; calcium-binding domain occupies 833–869 (NIDDCLDKPCGALSICKDGINAYDCFCAPGFVGNNCE). The EGF-like 17; calcium-binding domain maps to 871-907 (EVNECLSQPCQNGASCSDELNSFSCLCLAGTTGSLCE). Residues 909-945 (NIDECQSSPCMNNGTCLDLSDGFKCICPSGFSGPECS) form the EGF-like 18; calcium-binding domain. Asparagine 921 carries an N-linked (GlcNAc...) asparagine glycan. Residues 947 to 983 (DINECVSYPCKNGGSCIDQPGNYYCRCLAPFKGLNCE) enclose the EGF-like 19; calcium-binding domain. Residues 984–1026 (LLPCEAVNPCDNGAECVEEADLVLFPLGFQCRCRKGFTGPRCE) form the EGF-like 20 domain. The region spanning 1028–1063 (NIDECSSNPCLNGFCYDAVDGFYCLCNPGYAGVRCE) is the EGF-like 21; calcium-binding domain. The region spanning 1065–1101 (HINDCASNMCENNSTCVDLHLSYNCLCLPGWEGEYCQ) is the EGF-like 22 domain. A glycan (N-linked (GlcNAc...) asparagine) is linked at asparagine 1077. The EGF-like 23; calcium-binding domain maps to 1103 to 1139 (ETNECLSNPCKNNATCTDLLNAYRCVCPQGWTGLDCD). The N-linked (GlcNAc...) asparagine glycan is linked to asparagine 1115. EGF-like domains lie at 1141 to 1179 (DVKECSSSPCLNGAHCVESDTPGEFSCTCPPFFTGPLCE) and 1181 to 1220 (PYDPCELQRNPCLHNSTCRAQSDGTALCVCPVGFEGTRCE). Asparagine 1195 is a glycosylation site (N-linked (GlcNAc...) asparagine). The EGF-like 26; calcium-binding domain maps to 1222-1258 (DSDDCVSRPCQNRGICVDGVNSYSCFCEPGFSGLHCE). The EGF-like 27; calcium-binding domain occupies 1260–1296 (DINECASNPCQNQAVCQDLVNGFQCSCVPGYFGPHCN). The EGF-like 28; calcium-binding domain occupies 1298-1334 (DVNECDSSPCLHESVCINKPGGFACVCSAGFSGKWCE). The region spanning 1336–1372 (NVDECKSNPCRNNGSCIDGLNGYQCVCSRGFMGDHCE) is the EGF-like 29; calcium-binding domain. An N-linked (GlcNAc...) asparagine glycan is attached at asparagine 1348. Residues 1374-1409 (NTDECSSGPCVHGSCLDEIDAFSCQCEVGWTGHRCQ) enclose the EGF-like 30; calcium-binding domain. An EGF-like 31; calcium-binding domain is found at 1411–1447 (NINECEAHPCLNGGSCVDLLDKYACICADGFTGKNCD). Residues 1449–1491 (DQNVCLQTSLNFSLCFNGGTCVDGPGVNFTCSCRPGFMGDFCE) form the EGF-like 32 domain. N-linked (GlcNAc...) asparagine glycans are attached at residues asparagine 1459 and asparagine 1476. The EGF-like 33; calcium-binding domain occupies 1493–1529 (EMNECCSEPCFNGAICQDLINGYQCHCRPGWTGLHCE). An EGF-like 34 domain is found at 1531–1568 (DINECLLQPCNQGMCIQNEPGHGYTCFCRPGFVGENCE). N-linked (GlcNAc...) asparagine glycosylation is found at asparagine 1591, asparagine 1755, and asparagine 1788. The region spanning 1640–1818 (ASFGGYSGNS…AIARNNVDNC (179 aa)) is the Laminin G-like 1 domain. 4 disulfide bridges follow: cysteine 1792-cysteine 1818, cysteine 1860-cysteine 1871, cysteine 1865-cysteine 1885, and cysteine 1887-cysteine 1896. The EGF-like 35 domain occupies 1856–1897 (PAPVCPQGICLNGGTCRPVSLPSGASSFFCDCPLHFTGRLCE). Positions 1902–2102 (VFSPRFDGNS…NIQNCDAAVC (201 aa)) constitute a Laminin G-like 2 domain. N-linked (GlcNAc...) asparagine glycans are attached at residues asparagine 2025 and asparagine 2064. 7 disulfide bridges follow: cysteine 2071–cysteine 2102, cysteine 2102–cysteine 2113, cysteine 2107–cysteine 2122, cysteine 2124–cysteine 2133, cysteine 2138–cysteine 2149, cysteine 2143–cysteine 2159, and cysteine 2161–cysteine 2170. EGF-like domains lie at 2098-2134 (DAAVCQHQPCRNGGTCISDAESWFCACPSLYSGKLCQ) and 2135-2171 (FTACERNPCARGATCVPQTQLEAACLCPYGRQGLLCD). Asparagine 2175 and asparagine 2216 each carry an N-linked (GlcNAc...) asparagine glycan. The 191-residue stretch at 2182–2372 (SGLDEFGYSS…PLSGRNVGQC (191 aa)) folds into the Laminin G-like 3 domain. 7 disulfides stabilise this stretch: cysteine 2339–cysteine 2372, cysteine 2377–cysteine 2388, cysteine 2382–cysteine 2397, cysteine 2399–cysteine 2408, cysteine 2415–cysteine 2431, cysteine 2425–cysteine 2440, and cysteine 2442–cysteine 2451. EGF-like domains lie at 2373–2409 (GVNPCSLVFCHNGGTCVDSGSSVYCQCVFGWKGALCS) and 2411–2452 (KVSF…LHCQ). The Laminin G-like 4 domain maps to 2459–2642 (DPFFSGNQSS…NVGDWDGTAC (184 aa)). N-linked (GlcNAc...) asparagine glycans are attached at residues asparagine 2465, asparagine 2528, and asparagine 2570. EGF-like domains follow at residues 2638-2675 (DGTACGYKVCKNGGHCHPSGDFSFTCICPSLWTGSRCQ) and 2676-2714 (QSIQCLNNLCQHNSVCIHNSTSASYSCMCSLGWTGTHCD). Intrachain disulfides connect cysteine 2642–cysteine 2653, cysteine 2647–cysteine 2663, cysteine 2665–cysteine 2674, cysteine 2680–cysteine 2691, cysteine 2685–cysteine 2702, and cysteine 2704–cysteine 2713. N-linked (GlcNAc...) asparagine glycosylation is present at asparagine 2694. In terms of domain architecture, Laminin G-like 5 spans 2719–2894 (LKTIRFIGNS…TKQLQFLQTC (176 aa)). N-linked (GlcNAc...) asparagine glycosylation is found at asparagine 2750 and asparagine 2816.

The protein belongs to the EYS family. Expressed in retina where it localizes between the retinal pigment epithelium and the outer nuclear layer (at protein level).

The protein resides in the cell projection. It localises to the cilium. It is found in the cytoplasm. Its subcellular location is the cytoskeleton. The protein localises to the cilium axoneme. The protein resides in the secreted. It localises to the extracellular space. It is found in the extracellular matrix. Its subcellular location is the interphotoreceptor matrix. In terms of biological role, required to maintain the integrity of photoreceptor cells. Specifically required for normal morphology of the photoreceptor ciliary pocket, and might thus facilitate protein trafficking between the photoreceptor inner and outer segments via the transition zone. This Danio rerio (Zebrafish) protein is Protein eyes shut homolog.